The primary structure comprises 154 residues: Transcriptional repressor NrdR (154 aa).

Residues Cys3–Cys34 fold into a zinc finger. An ATP-cone domain is found at Leu49–Ser139.

This sequence belongs to the NrdR family. Requires Zn(2+) as cofactor.

In terms of biological role, negatively regulates transcription of bacterial ribonucleotide reductase nrd genes and operons by binding to NrdR-boxes. The chain is Transcriptional repressor NrdR from Carboxydothermus hydrogenoformans (strain ATCC BAA-161 / DSM 6008 / Z-2901).